Consider the following 154-residue polypeptide: Large ribosomal subunit protein uL13 (154 aa).

Residues 131-154 (DHKHEAQQPEVVDFKSMNSKNTRG) are disordered.

This sequence belongs to the universal ribosomal protein uL13 family. Part of the 50S ribosomal subunit.

Functionally, this protein is one of the early assembly proteins of the 50S ribosomal subunit, although it is not seen to bind rRNA by itself. It is important during the early stages of 50S assembly. This is Large ribosomal subunit protein uL13 from Maricaulis maris (strain MCS10) (Caulobacter maris).